A 314-amino-acid chain; its full sequence is DNA-directed RNA polymerase subunit alpha (314 aa).

The alpha N-terminal domain (alpha-NTD) stretch occupies residues 1–228 (MIEFEKPNIH…DHLSIFVNLT (228 aa)). Residues 245–314 (KEKMLEMTIE…DLGLSLRKED (70 aa)) are alpha C-terminal domain (alpha-CTD).

The protein belongs to the RNA polymerase alpha chain family. As to quaternary structure, homodimer. The RNAP catalytic core consists of 2 alpha, 1 beta, 1 beta' and 1 omega subunit. When a sigma factor is associated with the core the holoenzyme is formed, which can initiate transcription.

It carries out the reaction RNA(n) + a ribonucleoside 5'-triphosphate = RNA(n+1) + diphosphate. DNA-dependent RNA polymerase catalyzes the transcription of DNA into RNA using the four ribonucleoside triphosphates as substrates. This is DNA-directed RNA polymerase subunit alpha from Lactiplantibacillus plantarum (strain ATCC BAA-793 / NCIMB 8826 / WCFS1) (Lactobacillus plantarum).